The chain runs to 417 residues: Probable secreted aspartic protease ARB_07536 (417 aa).

A signal peptide spans 1–20; sequence MRGILILVALGAATIPQASA. One can recognise a Peptidase A1 domain in the interval 42–413; sequence NTDLVTIGTP…DFEKNRVGLA (372 aa). Residues asparagine 74, asparagine 91, asparagine 100, asparagine 170, asparagine 276, and asparagine 314 are each glycosylated (N-linked (GlcNAc...) asparagine). Cysteine 333 and cysteine 373 are oxidised to a cystine.

The protein belongs to the peptidase A1 family.

The protein localises to the secreted. In terms of biological role, probable secreted aspartic protease that supplies the fungus with nutrient amino acids. May be able to degrade the selected host's proteins involved in the immune defense. In Arthroderma benhamiae (strain ATCC MYA-4681 / CBS 112371) (Trichophyton mentagrophytes), this protein is Probable secreted aspartic protease ARB_07536.